A 166-amino-acid chain; its full sequence is UPF0304 protein VIBHAR_01542 (166 aa).

The protein belongs to the UPF0304 family.

The sequence is that of UPF0304 protein VIBHAR_01542 from Vibrio campbellii (strain ATCC BAA-1116).